A 1007-amino-acid chain; its full sequence is Aldehyde reductase lnbA (1007 aa).

An adenylation (A) domain region spans residues 35-428 (QVRQSPSSIA…GRVDHQIKVR (394 aa)). In terms of domain architecture, Carrier spans 540–617 (TLCQDTQTVL…ALASIIDHAK (78 aa)). Serine 577 carries the O-(pantetheine 4'-phosphoryl)serine modification. The tract at residues 659-998 (IFITGATGFV…PTLDCSLLKK (340 aa)) is short-chain dehydrogenase/reductase (R) domain.

The protein belongs to the NRP synthetase family.

The catalysed reaction is L-tyrosinal + AMP + diphosphate + NADP(+) = L-tyrosine + ATP + NADPH + H(+). Its pathway is secondary metabolite biosynthesis. Functionally, non-canonical nonribosomal peptide synthetase; part of the lnb gene cluster that mediates the biosynthesis of diastereomeric piperazines. Lna and lnb clusters encode sets of enzymes that produce overlapping sets of previously undescribed metabolites such as piperazinomycin-like metabolites or morpholine. The lna and lnb biosynthetic pathways appear to be part of a signaling network that controls the formation of sclerotia, a resilient overwintering structure. One primary function of the non-canonical nonribosomal peptide synthetases lnaA and lnbA consists in the reduction of L-tyrosine. The presence in the clusters of tailoring enzymes such as the oxidoreductases lnaB, lnbB, lnaE or lnbE, as well as of the cytochrome P450 monooxygenases lnaC, lnaD, or lnbC, might explain formation of various diastereomeric piperazines. The chain is Aldehyde reductase lnbA from Aspergillus flavus (strain ATCC 200026 / FGSC A1120 / IAM 13836 / NRRL 3357 / JCM 12722 / SRRC 167).